The sequence spans 518 residues: Sensor protein kinase HptS (518 aa).

2 helical membrane passes run 20–40 (IFPV…IYIW) and 222–242 (GITL…FGFI). A Histidine kinase domain is found at 297–513 (EQLIHSIEHT…LICYKIPLSR (217 aa)). Residue His325 is modified to Phosphohistidine; by autocatalysis.

Autophosphorylated.

The protein localises to the cell membrane. The catalysed reaction is ATP + protein L-histidine = ADP + protein N-phospho-L-histidine.. Its function is as follows. Member of the two-component regulatory system HptS/HptR that regulates genes involved in hexose phosphate transport system in response to changes in extracellular phosphate sources. May act as a sensor protein kinase which is autophosphorylated at a histidine residue and transfers its phosphate group to the conserved aspartic acid residue in the regulatory domain of HptS. In turn, HptS antagonizes CcpA-dependent transcription of a subset of CcpA-regulated genes involved in antibiotic susceptibility. In Staphylococcus aureus (strain Mu50 / ATCC 700699), this protein is Sensor protein kinase HptS (hptS).